The primary structure comprises 325 residues: Beta-ketoacyl-[acyl-carrier-protein] synthase III (325 aa).

Residues Cys119 and His252 contribute to the active site. The segment at 253–257 is ACP-binding; the sequence is QANIR. Residue Asn282 is part of the active site.

The protein belongs to the thiolase-like superfamily. FabH family. Homodimer.

The protein localises to the cytoplasm. It carries out the reaction malonyl-[ACP] + acetyl-CoA + H(+) = 3-oxobutanoyl-[ACP] + CO2 + CoA. It functions in the pathway lipid metabolism; fatty acid biosynthesis. In terms of biological role, catalyzes the condensation reaction of fatty acid synthesis by the addition to an acyl acceptor of two carbons from malonyl-ACP. Catalyzes the first condensation reaction which initiates fatty acid synthesis and may therefore play a role in governing the total rate of fatty acid production. Possesses both acetoacetyl-ACP synthase and acetyl transacylase activities. Its substrate specificity determines the biosynthesis of branched-chain and/or straight-chain of fatty acids. The polypeptide is Beta-ketoacyl-[acyl-carrier-protein] synthase III (Delftia acidovorans (strain DSM 14801 / SPH-1)).